The sequence spans 423 residues: AP-1 complex subunit mu-1 (423 aa).

An N-acetylserine modification is found at S2. Phosphothreonine is present on residues T152, T154, and T223. Residues 168 to 421 enclose the MHD domain; sequence KNEVFLDVIE…ITQNGDYQLR (254 aa).

It belongs to the adaptor complexes medium subunit family. In terms of assembly, adaptor protein complex 1 (AP-1) is a heterotetramer composed of two large adaptins (gamma-type subunit AP1G1 and beta-type subunit AP1B1), a medium adaptin (mu-type subunit AP1M1 or AP1M2) and a small adaptin (sigma-type subunit AP1S1 or AP1S2 or AP1S3). Interacts with MARCHF11. Phosphorylation of membrane-bound AP1M1/AP1M2 increases its affinity for sorting signals.

It localises to the golgi apparatus. The protein resides in the cytoplasmic vesicle. Its subcellular location is the clathrin-coated vesicle membrane. Functionally, subunit of clathrin-associated adaptor protein complex 1 that plays a role in protein sorting in the trans-Golgi network (TGN) and endosomes. The AP complexes mediate the recruitment of clathrin to membranes and the recognition of sorting signals within the cytosolic tails of transmembrane cargo molecules. This Mus musculus (Mouse) protein is AP-1 complex subunit mu-1 (Ap1m1).